We begin with the raw amino-acid sequence, 211 residues long: Protein-L-isoaspartate O-methyltransferase (211 aa).

Ser-60 is an active-site residue.

This sequence belongs to the methyltransferase superfamily. L-isoaspartyl/D-aspartyl protein methyltransferase family.

It is found in the cytoplasm. It carries out the reaction [protein]-L-isoaspartate + S-adenosyl-L-methionine = [protein]-L-isoaspartate alpha-methyl ester + S-adenosyl-L-homocysteine. In terms of biological role, catalyzes the methyl esterification of L-isoaspartyl residues in peptides and proteins that result from spontaneous decomposition of normal L-aspartyl and L-asparaginyl residues. It plays a role in the repair and/or degradation of damaged proteins. The chain is Protein-L-isoaspartate O-methyltransferase from Ectopseudomonas mendocina (strain ymp) (Pseudomonas mendocina).